Reading from the N-terminus, the 487-residue chain is NADH-quinone oxidoreductase subunit N (487 aa).

The next 14 helical transmembrane spans lie at 8-28, 37-57, 71-91, 104-124, 125-145, 159-179, 203-223, 235-255, 269-289, 303-323, 327-347, 374-394, 408-427, and 449-469; these read LLAL…MLAI, AFVV…IVMA, GYAV…CTFG, EFYL…GSRH, LASL…LVGY, YMVL…LLYA, LMGG…LAPF, PAPV…CVLL, IHWL…LLAL, ISHF…QMPV, GVYL…ISMM, AVLT…GFIG, WWLS…YYLR, and AITS…ALGL.

Belongs to the complex I subunit 2 family. As to quaternary structure, NDH-1 is composed of 14 different subunits. Subunits NuoA, H, J, K, L, M, N constitute the membrane sector of the complex.

The protein localises to the cell inner membrane. It carries out the reaction a quinone + NADH + 5 H(+)(in) = a quinol + NAD(+) + 4 H(+)(out). Its function is as follows. NDH-1 shuttles electrons from NADH, via FMN and iron-sulfur (Fe-S) centers, to quinones in the respiratory chain. The immediate electron acceptor for the enzyme in this species is believed to be ubiquinone. Couples the redox reaction to proton translocation (for every two electrons transferred, four hydrogen ions are translocated across the cytoplasmic membrane), and thus conserves the redox energy in a proton gradient. The sequence is that of NADH-quinone oxidoreductase subunit N from Aeromonas hydrophila subsp. hydrophila (strain ATCC 7966 / DSM 30187 / BCRC 13018 / CCUG 14551 / JCM 1027 / KCTC 2358 / NCIMB 9240 / NCTC 8049).